A 258-amino-acid polypeptide reads, in one-letter code: Steroid 5-alpha-reductase DET2 (258 aa).

6 consecutive transmembrane segments (helical) span residues 8-28 (FHYC…SLYF), 49-69 (LAWF…FPSG), 77-97 (SFLL…LYPL), 109-129 (FPVS…YLQA), 144-164 (LFWW…WVNV), and 201-221 (IMEW…GFFL).

This sequence belongs to the steroid 5-alpha reductase family. As to expression, accumulates in fibers (seed trichomes) during both their initiation and elongation phases. Also present in roots, hypocotyls, leaves, flowers and ovules, and barely in cotyledons.

The protein resides in the membrane. It carries out the reaction a 3-oxo-5alpha-steroid + NADP(+) = a 3-oxo-Delta(4)-steroid + NADPH + H(+). It functions in the pathway plant hormone biosynthesis; brassinosteroid biosynthesis. Involved in a reduction step in the biosynthesis of the plant steroid, brassinolide (BL). Promotes cotton fibers (seed trichomes) initiation and elongation. This chain is Steroid 5-alpha-reductase DET2, found in Gossypium hirsutum (Upland cotton).